Consider the following 283-residue polypeptide: Thymidylate synthase (283 aa).

Arg22 lines the dUMP pocket. The Nucleophile role is filled by Cys160. Residues 180–183, Asn191, and 221–223 contribute to the dUMP site; these read RSCD and HIY. (6R)-5,10-methylene-5,6,7,8-tetrahydrofolate is bound at residue Asp183. (6R)-5,10-methylene-5,6,7,8-tetrahydrofolate is bound at residue Ser282.

Belongs to the thymidylate synthase family. Bacterial-type ThyA subfamily. As to quaternary structure, homodimer.

The protein resides in the cytoplasm. The enzyme catalyses dUMP + (6R)-5,10-methylene-5,6,7,8-tetrahydrofolate = 7,8-dihydrofolate + dTMP. Its pathway is pyrimidine metabolism; dTTP biosynthesis. Its function is as follows. Catalyzes the reductive methylation of 2'-deoxyuridine-5'-monophosphate (dUMP) to 2'-deoxythymidine-5'-monophosphate (dTMP) while utilizing 5,10-methylenetetrahydrofolate (mTHF) as the methyl donor and reductant in the reaction, yielding dihydrofolate (DHF) as a by-product. This enzymatic reaction provides an intracellular de novo source of dTMP, an essential precursor for DNA biosynthesis. The polypeptide is Thymidylate synthase (Haemophilus influenzae (strain 86-028NP)).